A 517-amino-acid polypeptide reads, in one-letter code: Putative thymidine phosphorylase (517 aa).

This sequence belongs to the thymidine/pyrimidine-nucleoside phosphorylase family. Type 2 subfamily.

It catalyses the reaction thymidine + phosphate = 2-deoxy-alpha-D-ribose 1-phosphate + thymine. The sequence is that of Putative thymidine phosphorylase from Legionella pneumophila (strain Corby).